The sequence spans 362 residues: Lipoprotein p35 (362 aa).

An N-terminal signal peptide occupies residues 1-30; that stretch reads MKIKKIKLLKALALTGAFGIVATVPVIVSS. A lipid anchor (N-palmitoyl cysteine) is attached at cysteine 31. Residue cysteine 31 is the site of S-diacylglycerol cysteine attachment. Residues 33-53 form a disordered region; the sequence is STSENNGNGNGNGGTDGNTQQ.

The protein belongs to the p35 lipoprotein family. In terms of processing, the N-terminus is blocked.

The protein resides in the cell membrane. Major M.penetrans antigen. The sequence is that of Lipoprotein p35 from Malacoplasma penetrans (Mycoplasma penetrans).